A 109-amino-acid chain; its full sequence is Large ribosomal subunit protein uL23 (109 aa).

This sequence belongs to the universal ribosomal protein uL23 family. Part of the 50S ribosomal subunit. Contacts protein L29, and trigger factor when it is bound to the ribosome.

In terms of biological role, one of the early assembly proteins it binds 23S rRNA. One of the proteins that surrounds the polypeptide exit tunnel on the outside of the ribosome. Forms the main docking site for trigger factor binding to the ribosome. The polypeptide is Large ribosomal subunit protein uL23 (Prosthecochloris aestuarii (strain DSM 271 / SK 413)).